Consider the following 444-residue polypeptide: N-succinylarginine dihydrolase (444 aa).

Residues 19-28 (AGLSFGNVAS), asparagine 110, and 137-138 (HR) contribute to the substrate site. Glutamate 174 is a catalytic residue. Arginine 214 provides a ligand contact to substrate. Histidine 250 is an active-site residue. Aspartate 252 and asparagine 362 together coordinate substrate. Catalysis depends on cysteine 368, which acts as the Nucleophile.

It belongs to the succinylarginine dihydrolase family. In terms of assembly, homodimer.

It carries out the reaction N(2)-succinyl-L-arginine + 2 H2O + 2 H(+) = N(2)-succinyl-L-ornithine + 2 NH4(+) + CO2. It participates in amino-acid degradation; L-arginine degradation via AST pathway; L-glutamate and succinate from L-arginine: step 2/5. Catalyzes the hydrolysis of N(2)-succinylarginine into N(2)-succinylornithine, ammonia and CO(2). This is N-succinylarginine dihydrolase from Shewanella putrefaciens (strain CN-32 / ATCC BAA-453).